Consider the following 255-residue polypeptide: 4-diphosphocytidyl-2-C-methyl-D-erythritol kinase (255 aa).

Residue K6 is part of the active site. Residue 95–105 (PVCAGLGGGSS) coordinates ATP. The active site involves D137.

The protein belongs to the GHMP kinase family. IspE subfamily.

It catalyses the reaction 4-CDP-2-C-methyl-D-erythritol + ATP = 4-CDP-2-C-methyl-D-erythritol 2-phosphate + ADP + H(+). The protein operates within isoprenoid biosynthesis; isopentenyl diphosphate biosynthesis via DXP pathway; isopentenyl diphosphate from 1-deoxy-D-xylulose 5-phosphate: step 3/6. Its function is as follows. Catalyzes the phosphorylation of the position 2 hydroxy group of 4-diphosphocytidyl-2C-methyl-D-erythritol. This Campylobacter jejuni subsp. jejuni serotype O:2 (strain ATCC 700819 / NCTC 11168) protein is 4-diphosphocytidyl-2-C-methyl-D-erythritol kinase.